The following is a 462-amino-acid chain: Calcitonin gene-related peptide type 1 receptor (462 aa).

The first 22 residues, 1 to 22, serve as a signal peptide directing secretion; that stretch reads MEKKYILYFLFLLPFFMILVIA. At 23-140 the chain is on the extracellular side; the sequence is ETEEENPDDL…NTHEKVQTAL (118 aa). 3 cysteine pairs are disulfide-bonded: C49–C75, C66–C106, and C89–C128. N-linked (GlcNAc...) asparagine glycosylation is found at N67, N119, and N124. Residues 141–165 traverse the membrane as a helical segment; the sequence is NLFYLTIIGHGLSIASLLISLGIFF. The Cytoplasmic portion of the chain corresponds to 166-176; that stretch reads YFKSLSCQRIT. Residues 177-199 form a helical membrane-spanning segment; the sequence is LHKNLFFSFVCNSIVTIIHLTAV. Residues 200-210 lie on the Extracellular side of the membrane; the sequence is ANNQALVATNP. The chain crosses the membrane as a helical span at residues 211–239; it reads VSCKVFQFIHLYLMGCNYFWMLCEGIYLH. Topologically, residues 240–253 are cytoplasmic; that stretch reads TLIVVAVFAEKQHL. The helical transmembrane segment at 254–274 threads the bilayer; the sequence is MWYYFLGWGFPLIPACIHAVA. Topologically, residues 275–290 are extracellular; the sequence is RRLYYNDNCWISSDTH. The interval 289–290 is required for RAMP3 interaction; the sequence is TH. Residues 291–315 form a helical membrane-spanning segment; that stretch reads LLYIIHGPICAALLVNLFFLLNIVR. Residues 316–330 lie on the Cytoplasmic side of the membrane; the sequence is VLITKLKVTHQAESN. A helical membrane pass occupies residues 331 to 352; it reads LYMKAVRATLILVPLLGIEFVL. Residues 353 to 367 lie on the Extracellular side of the membrane; the sequence is IPWRPEGKIAEEVYD. A helical membrane pass occupies residues 368–388; it reads YIMHILVHYQGLLVSTIYCFF. Residues 389–462 are Cytoplasmic-facing; that stretch reads NGEVQAILRR…IVIKPEKLYD (74 aa). Phosphoserine is present on residues S421 and S446.

The protein belongs to the G-protein coupled receptor 2 family. As to quaternary structure, heterodimer of CALCRL and RAMP1; the receptor complex functions as CGRP receptor. Heterodimer of CALCRL and RAMP2 or CALCRL and RAMP3; the complexes function as adrenomedullin receptor. Detected in lung and coronary artery.

The protein localises to the cell membrane. G protein-coupled receptor which specificity is determined by its interaction with receptor-activity-modifying proteins (RAMPs). Together with RAMP1, form the receptor complex for calcitonin-gene-related peptides CALCA/CGRP1 and CALCB/CGRP2. Together with RAMP2 or RAMP3, function as receptor complexes for adrenomedullin (ADM and ADM2). Ligand binding causes a conformation change that triggers signaling via guanine nucleotide-binding proteins (G proteins) and modulates the activity of downstream effectors. Activates cAMP-dependent pathway. This chain is Calcitonin gene-related peptide type 1 receptor (CALCRL), found in Sus scrofa (Pig).